The following is a 366-amino-acid chain: Actin-like protein 8 (366 aa).

It belongs to the actin family. As to expression, strongly expressed in testis and pancreas. Weak expression in placenta.

Its subcellular location is the cytoplasm. It is found in the cytoskeleton. In Homo sapiens (Human), this protein is Actin-like protein 8 (ACTL8).